A 162-amino-acid chain; its full sequence is NADH-quinone oxidoreductase subunit I (162 aa).

4Fe-4S ferredoxin-type domains lie at 53 to 83 (LRRYPNGEERCIACKLCEAVCPALAITIDSE) and 93 to 122 (TRYDIDLTKCIFCGFCEESCPVDSIVETRI). 8 residues coordinate [4Fe-4S] cluster: cysteine 63, cysteine 66, cysteine 69, cysteine 73, cysteine 102, cysteine 105, cysteine 108, and cysteine 112.

It belongs to the complex I 23 kDa subunit family. As to quaternary structure, NDH-1 is composed of 14 different subunits. Subunits NuoA, H, J, K, L, M, N constitute the membrane sector of the complex. The cofactor is [4Fe-4S] cluster.

The protein resides in the cell inner membrane. It carries out the reaction a quinone + NADH + 5 H(+)(in) = a quinol + NAD(+) + 4 H(+)(out). Its function is as follows. NDH-1 shuttles electrons from NADH, via FMN and iron-sulfur (Fe-S) centers, to quinones in the respiratory chain. The immediate electron acceptor for the enzyme in this species is believed to be ubiquinone. Couples the redox reaction to proton translocation (for every two electrons transferred, four hydrogen ions are translocated across the cytoplasmic membrane), and thus conserves the redox energy in a proton gradient. The chain is NADH-quinone oxidoreductase subunit I from Thiobacillus denitrificans (strain ATCC 25259 / T1).